The primary structure comprises 651 residues: E3 SUMO-protein ligase PIAS1 (651 aa).

An N-acetylalanine modification is found at Ala2. Residues 2–200 (ADSAELKQMV…KCDFTVQVQL (199 aa)) form a required for interaction with MSX1 region. An SAP domain is found at 11 to 45 (VMSLRVSELQVLLGYAGRNKHGRKHELLTKALHLL). Positions 19 to 23 (LQVLL) match the LXXLL motif motif. Glycyl lysine isopeptide (Lys-Gly) (interchain with G-Cter in SUMO2) cross-links involve residues Lys40 and Lys46. The Nuclear localization signal motif lies at 56–64 (KIKELYRRR). Residues 124-288 (HLTSALHPVH…SMAVYLVKQL (165 aa)) enclose the PINIT domain. Residues Lys137 and Lys238 each participate in a glycyl lysine isopeptide (Lys-Gly) (interchain with G-Cter in SUMO2) cross-link. The SP-RING-type zinc finger occupies 320–405 (PDSEIATTSL…LKYCTDCDEI (86 aa)). Residues Cys351, His353, Cys374, and Cys377 each coordinate Zn(2+). The Nuclear localization signal motif lies at 368–380 (KKPTWVCPVCDKK). Residue Lys453 forms a Glycyl lysine isopeptide (Lys-Gly) (interchain with G-Cter in SUMO2) linkage. An SUMO1-binding region spans residues 462-473 (LTIDSSSDEEEE). Residues 465 to 511 (DSSSDEEEEEPPAKRTCPSLSPTSPLSNKGILSLPHQASPVSRTPSL) are disordered. Residues Ser467, Ser468, Ser483, and Ser485 each carry the phosphoserine modification. A compositionally biased stretch (low complexity) spans 482–491 (PSLSPTSPLS). Thr487 is subject to Phosphothreonine. 2 positions are modified to phosphoserine: Ser488 and Ser491. A Glycyl lysine isopeptide (Lys-Gly) (interchain with G-Cter in SUMO2) cross-link involves residue Lys493. Ser503, Ser510, and Ser522 each carry phosphoserine. 2 tandem repeats follow at residues 520–523 (NTSL) and 557–560 (NTSL). Positions 520-615 (NTSLIQDYRH…GSSSGSNSSL (96 aa)) are 4 X 4 AA repeats of N-T-S-L. The 3; approximate repeat unit spans residues 598-601 (STSL). A disordered region spans residues 600–630 (SLPATNGSSSGSNSSLVSSNSLRESHGHGVA). A compositionally biased stretch (low complexity) spans 605 to 621 (NGSSSGSNSSLVSSNSL). The stretch at 612-615 (NSSL) is one 4; approximate repeat.

Belongs to the PIAS family. Interacts with NR2C1; the interaction promotes its sumoylation. Interacts with DDX21, CSRP2, AXIN1, JUN, SATB2, PLAG1, TP53 and STAT1 (dimer), following IFNA1-stimulation. Interacts with SP3 (preferentially when SUMO-modified). Interacts with KLF8; the interaction results in SUMO ligation and repression of KLF8 transcriptional activity and of its cell cycle progression into G(1) phase. Interacts with CHUK/IKKA; this interaction induces PIAS1 phosphorylation. Interacts with PTK2/FAK1; the interaction promotes its sumoylation. Interacts with SUMO1, UBE2I, NCOA2 and AR. Interacts with NR2C1; the interaction promotes its sumoylation. Interacts with DDX5. Interacts with MTA1. Interacts with PML (isoform PML-12). Interacts with PRDM1. Interacts (via N-terminus) with MSX1 (via C-terminus); the interaction is required for the localization of both proteins to the nuclear periphery and specific binding of MSX1 to the core enhancer region in target gene promoters. Sumoylated. Expressed in kidney, heart, spleen, brain and cerebellum; weak expression, if any, in liver and lung.

It localises to the nucleus. Its subcellular location is the nucleus speckle. The protein localises to the PML body. It is found in the cytoplasm. The protein resides in the cytoskeleton. The enzyme catalyses S-ubiquitinyl-[E2 ubiquitin-conjugating enzyme]-L-cysteine + [acceptor protein]-L-lysine = [E2 ubiquitin-conjugating enzyme]-L-cysteine + N(6)-ubiquitinyl-[acceptor protein]-L-lysine.. It participates in protein modification; protein sumoylation. Functionally, functions as an E3-type small ubiquitin-like modifier (SUMO) ligase, stabilizing the interaction between UBE2I and the substrate, and as a SUMO-tethering factor. Catalyzes sumoylation of various proteins, such as CEBPB, MRE11, MTA1, PTK2 and PML. Plays a crucial role as a transcriptional coregulation in various cellular pathways, including the STAT pathway, the p53 pathway and the steroid hormone signaling pathway. In vitro, binds A/T-rich DNA. The effects of this transcriptional coregulation, transactivation or silencing, may vary depending upon the biological context. Mediates sumoylation of MRE11, stabilizing MRE11 on chromatin during end resection. Sumoylates PML (at 'Lys-65' and 'Lys-160') and PML-RAR and promotes their ubiquitin-mediated degradation. PIAS1-mediated sumoylation of PML promotes its interaction with CSNK2A1/CK2 which in turn promotes PML phosphorylation and degradation. Enhances the sumoylation of MTA1 and may participate in its paralog-selective sumoylation. Plays a dynamic role in adipogenesis by promoting the SUMOylation and degradation of CEBPB. Mediates the nuclear mobility and localization of MSX1 to the nuclear periphery, whereby MSX1 is brought into the proximity of target myoblast differentiation factor genes. Also required for the binding of MSX1 to the core enhancer region in target gene promoter regions, independent of its sumoylation activity. Capable of binding to the core enhancer region TAAT box in the MYOD1 gene promoter. In Mus musculus (Mouse), this protein is E3 SUMO-protein ligase PIAS1 (Pias1).